The chain runs to 337 residues: Histidine N-acetyltransferase (337 aa).

Positions 1–2 (MK) are cleaved as a propeptide — removed in mature form. Positions 21 to 156 (LQFAVATEED…QGILLVRFRA (136 aa)) constitute an N-acetyltransferase domain.

It carries out the reaction L-histidine + acetyl-CoA = N(alpha)-acetyl-L-histidine + CoA + H(+). In terms of biological role, enzyme responsible for the N-acetyl-histidine (NAH) synthesis, which is a major constituent of brain and lens of ectothermic vertebrates. This is Histidine N-acetyltransferase (hisat) from Scomber australasicus (Blue mackerel).